Reading from the N-terminus, the 72-residue chain is Metallothionein-like protein type 2 (72 aa).

It belongs to the metallothionein superfamily. Type 15 family.

Functionally, metallothioneins have a high content of cysteine residues that bind various heavy metals. In Solanum lycopersicum (Tomato), this protein is Metallothionein-like protein type 2.